A 292-amino-acid polypeptide reads, in one-letter code: Probable 2-(5''-triphosphoribosyl)-3'-dephosphocoenzyme-A synthase (292 aa).

Belongs to the CitG/MdcB family.

It carries out the reaction 3'-dephospho-CoA + ATP = 2'-(5''-triphospho-alpha-D-ribosyl)-3'-dephospho-CoA + adenine. The polypeptide is Probable 2-(5''-triphosphoribosyl)-3'-dephosphocoenzyme-A synthase (Shigella flexneri).